Reading from the N-terminus, the 197-residue chain is Protein RESISTANCE TO PHYTOPHTHORA 1, chloroplastic (197 aa).

Residues 1-52 (MSWSLCSTHGVSSSIALTYGFRHRRRSTFRIFATSDGLEPKDDPPESPLPSS) constitute a chloroplast transit peptide. Positions 35-56 (SDGLEPKDDPPESPLPSSSSAL) are disordered. 4 consecutive transmembrane segments (helical) span residues 93-113 (FEVQ…NLLF), 120-140 (LWRL…LRAR), 150-170 (LNYL…FWKS), and 173-193 (LVWS…LGWL).

It is found in the plastid. Its subcellular location is the chloroplast. The protein resides in the membrane. Plays a positive role in the immune response to the oomycetes P.brassicae, including induced oxidative burst (e.g. H(2)O(2)) and enhanced expression of defense-related genes. The chain is Protein RESISTANCE TO PHYTOPHTHORA 1, chloroplastic from Arabidopsis thaliana (Mouse-ear cress).